Here is a 230-residue protein sequence, read N- to C-terminus: Ion-translocating oxidoreductase complex subunit E (230 aa).

The next 6 membrane-spanning stretches (helical) occupy residues 18 to 38, 39 to 59, 63 to 83, 86 to 106, 125 to 145, and 182 to 202; these read ALVQ…ATNA, LGLG…VSAL, TPAE…VSAV, LINA…PLIV, WLSA…MFVL, and PFLL…MLAV.

It belongs to the NqrDE/RnfAE family. The complex is composed of six subunits: RsxA, RsxB, RsxC, RsxD, RsxE and RsxG.

The protein resides in the cell inner membrane. Its function is as follows. Part of a membrane-bound complex that couples electron transfer with translocation of ions across the membrane. Required to maintain the reduced state of SoxR. The sequence is that of Ion-translocating oxidoreductase complex subunit E from Salmonella dublin (strain CT_02021853).